The chain runs to 264 residues: MSSSAPIGVFDSGLGGISVARQIAKDMPAEHVLYFGDSANAPYGIKTPEQVRALSFDIVERFVRQGVKAVVIACNTATSAAVNDLREHYDIPIIGMEPALKVACDRGDVPSDPHHIPQRVIVAATPLTLRERKFATLMDRFDSQNTIFKEPCPDLVEIVESGRLGDHDLVMRTLHGYFDQYDMEHIDSVVLGCTHFVFYRDYFRELLPERAAVIDGNEGTVRHLGVVLESLGKLAPEGATGGVELANSDPSERIAELSRKLLNV.

Substrate contacts are provided by residues 11 to 12 (DS) and 43 to 44 (YG). The active-site Proton donor/acceptor is the cysteine 74. 75–76 (NT) is a binding site for substrate. Cysteine 193 functions as the Proton donor/acceptor in the catalytic mechanism. Substrate is bound at residue 194-195 (TH).

The protein belongs to the aspartate/glutamate racemases family.

The catalysed reaction is L-glutamate = D-glutamate. Its pathway is cell wall biogenesis; peptidoglycan biosynthesis. Its function is as follows. Provides the (R)-glutamate required for cell wall biosynthesis. In Bifidobacterium longum subsp. infantis (strain ATCC 15697 / DSM 20088 / JCM 1222 / NCTC 11817 / S12), this protein is Glutamate racemase.